A 363-amino-acid chain; its full sequence is Probable dual-specificity RNA methyltransferase RlmN (363 aa).

Glutamate 99 acts as the Proton acceptor in catalysis. Residues 105-341 (SENRMTACVS…VTVRKSHGAS (237 aa)) enclose the Radical SAM core domain. An intrachain disulfide couples cysteine 112 to cysteine 346. 3 residues coordinate [4Fe-4S] cluster: cysteine 119, cysteine 123, and cysteine 126. S-adenosyl-L-methionine-binding positions include 171-172 (GE), serine 204, 227-229 (SLH), and asparagine 303. Residue cysteine 346 is the S-methylcysteine intermediate of the active site.

The protein belongs to the radical SAM superfamily. RlmN family. The cofactor is [4Fe-4S] cluster.

The protein resides in the cytoplasm. It catalyses the reaction adenosine(2503) in 23S rRNA + 2 reduced [2Fe-2S]-[ferredoxin] + 2 S-adenosyl-L-methionine = 2-methyladenosine(2503) in 23S rRNA + 5'-deoxyadenosine + L-methionine + 2 oxidized [2Fe-2S]-[ferredoxin] + S-adenosyl-L-homocysteine. The catalysed reaction is adenosine(37) in tRNA + 2 reduced [2Fe-2S]-[ferredoxin] + 2 S-adenosyl-L-methionine = 2-methyladenosine(37) in tRNA + 5'-deoxyadenosine + L-methionine + 2 oxidized [2Fe-2S]-[ferredoxin] + S-adenosyl-L-homocysteine. Specifically methylates position 2 of adenine 2503 in 23S rRNA and position 2 of adenine 37 in tRNAs. This is Probable dual-specificity RNA methyltransferase RlmN from Chlorobium phaeobacteroides (strain DSM 266 / SMG 266 / 2430).